A 271-amino-acid chain; its full sequence is Putative phosphoenolpyruvate synthase regulatory protein (271 aa).

An ADP-binding site is contributed by 151-158 (GVSRSGKT).

The protein belongs to the pyruvate, phosphate/water dikinase regulatory protein family. PSRP subfamily.

It carries out the reaction [pyruvate, water dikinase] + ADP = [pyruvate, water dikinase]-phosphate + AMP + H(+). The catalysed reaction is [pyruvate, water dikinase]-phosphate + phosphate + H(+) = [pyruvate, water dikinase] + diphosphate. Bifunctional serine/threonine kinase and phosphorylase involved in the regulation of the phosphoenolpyruvate synthase (PEPS) by catalyzing its phosphorylation/dephosphorylation. This chain is Putative phosphoenolpyruvate synthase regulatory protein, found in Burkholderia ambifaria (strain MC40-6).